We begin with the raw amino-acid sequence, 130 residues long: Small ribosomal subunit protein uS8 (130 aa).

It belongs to the universal ribosomal protein uS8 family. As to quaternary structure, part of the 30S ribosomal subunit. Contacts proteins S5 and S12.

In terms of biological role, one of the primary rRNA binding proteins, it binds directly to 16S rRNA central domain where it helps coordinate assembly of the platform of the 30S subunit. This chain is Small ribosomal subunit protein uS8, found in Pseudomonas syringae pv. tomato (strain ATCC BAA-871 / DC3000).